The following is a 366-amino-acid chain: MNKVVLLCRPGFEKECAAEITDKAGKREIFGFARVKENAGYVIYECYQPEDGEKLISELPFSSLIFARQWFVVGELLQHLPPEDRITPIVGMLQGVVEKGGELRVEVADTNESKELMKFCRKFTVPLRAALRDAGVLTNYETPKRPVVHVFFIAPGCCYTGYSLAHNNSPFYMGIPRLKFPSDAPSRSTLKLEEALHVFIPEDEWDERLANGMYAVDLGACPGGWTYQLVKRNMWVYSVDNGPMAQSLMDTGQVTWLREDGFRYRPNRNNISWMVCDMVEKPAKVTALMAQWLVNGWCRETIFNLKLPMKKRYEEVSHNLAYLQAQLDEHGVNAQIQARQLYHDREEVTVHVRRLWAAVGGRRDER.

S-adenosyl-L-methionine-binding positions include Ser188, 221–224 (CPGG), Asp240, Asp260, and Asp277. Lys306 functions as the Proton acceptor in the catalytic mechanism.

The protein belongs to the class I-like SAM-binding methyltransferase superfamily. RNA methyltransferase RlmE family. RlmM subfamily. As to quaternary structure, monomer.

It is found in the cytoplasm. It carries out the reaction cytidine(2498) in 23S rRNA + S-adenosyl-L-methionine = 2'-O-methylcytidine(2498) in 23S rRNA + S-adenosyl-L-homocysteine + H(+). Functionally, catalyzes the 2'-O-methylation at nucleotide C2498 in 23S rRNA. In Salmonella agona (strain SL483), this protein is Ribosomal RNA large subunit methyltransferase M.